The primary structure comprises 189 residues: UPF0301 protein PFLU_5755 (189 aa).

This sequence belongs to the UPF0301 (AlgH) family.

The protein is UPF0301 protein PFLU_5755 of Pseudomonas fluorescens (strain SBW25).